The chain runs to 187 residues: Elongation factor P (187 aa).

The protein belongs to the elongation factor P family.

It is found in the cytoplasm. It participates in protein biosynthesis; polypeptide chain elongation. Functionally, involved in peptide bond synthesis. Stimulates efficient translation and peptide-bond synthesis on native or reconstituted 70S ribosomes in vitro. Probably functions indirectly by altering the affinity of the ribosome for aminoacyl-tRNA, thus increasing their reactivity as acceptors for peptidyl transferase. The sequence is that of Elongation factor P from Arthrobacter sp. (strain FB24).